Reading from the N-terminus, the 72-residue chain is Hypotensin (72 aa).

The signal sequence occupies residues 1 to 24 (MKMMIAVFVSILLLMFSLSSTAMG). 2 consecutive propeptides follow at residues 25-35 (METEQQNMEER) and 61-72 (RFDPATFGENED).

Belongs to the non-disulfide-bridged peptide (NDBP) superfamily. In terms of tissue distribution, expressed by the venom gland.

It localises to the secreted. Its function is as follows. Potentiates the hypotensive action of bradykinin (BK) in normotensive rats, and induces a vasorelaxant effect in mesenteric artery rings that is induced by endothelium-dependent release of nitric oxide (NO). Does not inhibit angiotensin converting enzyme (ACE). Shows neither hemolytic activity nor cytotoxicity to normal and cancer cells. Shows moderate antimicrobial activity against the fungi Candida albicans and the filamentous fungus Trichophyton rubrum, as well as against the bacteria C.albicans (MIC=128 ug/mL), C.tropicalis (MIC=128 ug/mL) and Aspergillus flavus (MIC=128 ug/mL). Has no antimicrobial activity against S.aureus, S.epidermidis and P.aeruginosa. The sequence is that of Hypotensin from Tityus stigmurus (Brazilian scorpion).